Here is a 180-residue protein sequence, read N- to C-terminus: Large ribosomal subunit protein uL5 (180 aa).

The protein belongs to the universal ribosomal protein uL5 family. As to quaternary structure, part of the 50S ribosomal subunit; part of the 5S rRNA/L5/L18/L25 subcomplex. Contacts the 5S rRNA and the P site tRNA. Forms a bridge to the 30S subunit in the 70S ribosome.

In terms of biological role, this is one of the proteins that bind and probably mediate the attachment of the 5S RNA into the large ribosomal subunit, where it forms part of the central protuberance. In the 70S ribosome it contacts protein S13 of the 30S subunit (bridge B1b), connecting the 2 subunits; this bridge is implicated in subunit movement. Contacts the P site tRNA; the 5S rRNA and some of its associated proteins might help stabilize positioning of ribosome-bound tRNAs. This chain is Large ribosomal subunit protein uL5, found in Streptococcus equi subsp. equi (strain 4047).